Consider the following 212-residue polypeptide: 2-phospho-L-lactate guanylyltransferase (212 aa).

The protein belongs to the CofC family. As to quaternary structure, homodimer.

The catalysed reaction is (2S)-2-phospholactate + GTP + H(+) = (2S)-lactyl-2-diphospho-5'-guanosine + diphosphate. It functions in the pathway cofactor biosynthesis; coenzyme F420 biosynthesis. Its function is as follows. Guanylyltransferase that catalyzes the activation of (2S)-2-phospholactate (2-PL) as (2S)-lactyl-2-diphospho-5'-guanosine, via the condensation of 2-PL with GTP. It is involved in the biosynthesis of coenzyme F420, a hydride carrier cofactor. This Methanocorpusculum labreanum (strain ATCC 43576 / DSM 4855 / Z) protein is 2-phospho-L-lactate guanylyltransferase.